The following is a 363-amino-acid chain: Phosphoserine aminotransferase (363 aa).

Arg42 is a binding site for L-glutamate. Residues 76–77 (GR), Trp102, Thr156, Asp175, and Gln198 contribute to the pyridoxal 5'-phosphate site. Lys199 carries the post-translational modification N6-(pyridoxal phosphate)lysine. 240–241 (NT) contributes to the pyridoxal 5'-phosphate binding site.

Belongs to the class-V pyridoxal-phosphate-dependent aminotransferase family. SerC subfamily. In terms of assembly, homodimer. The cofactor is pyridoxal 5'-phosphate.

It is found in the cytoplasm. It catalyses the reaction O-phospho-L-serine + 2-oxoglutarate = 3-phosphooxypyruvate + L-glutamate. The catalysed reaction is 4-(phosphooxy)-L-threonine + 2-oxoglutarate = (R)-3-hydroxy-2-oxo-4-phosphooxybutanoate + L-glutamate. The protein operates within amino-acid biosynthesis; L-serine biosynthesis; L-serine from 3-phospho-D-glycerate: step 2/3. Its pathway is cofactor biosynthesis; pyridoxine 5'-phosphate biosynthesis; pyridoxine 5'-phosphate from D-erythrose 4-phosphate: step 3/5. In terms of biological role, catalyzes the reversible conversion of 3-phosphohydroxypyruvate to phosphoserine and of 3-hydroxy-2-oxo-4-phosphonooxybutanoate to phosphohydroxythreonine. This chain is Phosphoserine aminotransferase, found in Shewanella baltica (strain OS185).